Consider the following 109-residue polypeptide: Fluoride-specific ion channel FluC 1 (109 aa).

The next 4 membrane-spanning stretches (helical) occupy residues methionine 1–serine 21, leucine 29–asparagine 49, glutamate 55–asparagine 75, and valine 87–isoleucine 107. Na(+) contacts are provided by glycine 66 and threonine 69.

This sequence belongs to the fluoride channel Fluc/FEX (TC 1.A.43) family.

It is found in the cell membrane. It carries out the reaction fluoride(in) = fluoride(out). With respect to regulation, na(+) is not transported, but it plays an essential structural role and its presence is essential for fluoride channel function. Fluoride-specific ion channel. Important for reducing fluoride concentration in the cell, thus reducing its toxicity. The protein is Fluoride-specific ion channel FluC 1 of Streptococcus pneumoniae serotype 4 (strain ATCC BAA-334 / TIGR4).